The sequence spans 254 residues: 5-oxoprolinase subunit A 1 (254 aa).

It belongs to the LamB/PxpA family. In terms of assembly, forms a complex composed of PxpA, PxpB and PxpC.

The enzyme catalyses 5-oxo-L-proline + ATP + 2 H2O = L-glutamate + ADP + phosphate + H(+). In terms of biological role, catalyzes the cleavage of 5-oxoproline to form L-glutamate coupled to the hydrolysis of ATP to ADP and inorganic phosphate. The polypeptide is 5-oxoprolinase subunit A 1 (Burkholderia pseudomallei (strain K96243)).